A 244-amino-acid chain; its full sequence is 5-oxoprolinase subunit A (244 aa).

This sequence belongs to the LamB/PxpA family. In terms of assembly, forms a complex composed of PxpA, PxpB and PxpC.

The enzyme catalyses 5-oxo-L-proline + ATP + 2 H2O = L-glutamate + ADP + phosphate + H(+). In terms of biological role, catalyzes the cleavage of 5-oxoproline to form L-glutamate coupled to the hydrolysis of ATP to ADP and inorganic phosphate. The protein is 5-oxoprolinase subunit A of Salmonella paratyphi A (strain ATCC 9150 / SARB42).